Consider the following 126-residue polypeptide: Fluoride-specific ion channel FluC 2 (126 aa).

Transmembrane regions (helical) follow at residues 11 to 31 (IFLI…LCEL), 34 to 54 (GQLG…MIMY), 66 to 86 (GKIA…TFAV), and 93 to 113 (FIPA…GVFF). Na(+)-binding residues include Gly-76 and Thr-79.

This sequence belongs to the fluoride channel Fluc/FEX (TC 1.A.43) family.

It is found in the cell membrane. The catalysed reaction is fluoride(in) = fluoride(out). Its activity is regulated as follows. Na(+) is not transported, but it plays an essential structural role and its presence is essential for fluoride channel function. Fluoride-specific ion channel. Important for reducing fluoride concentration in the cell, thus reducing its toxicity. This Methanosarcina acetivorans (strain ATCC 35395 / DSM 2834 / JCM 12185 / C2A) protein is Fluoride-specific ion channel FluC 2.